Here is a 464-residue protein sequence, read N- to C-terminus: Soluble pyridine nucleotide transhydrogenase (464 aa).

Residue D35–C44 participates in FAD binding.

The protein belongs to the class-I pyridine nucleotide-disulfide oxidoreductase family. It depends on FAD as a cofactor.

The protein resides in the cytoplasm. It catalyses the reaction NAD(+) + NADPH = NADH + NADP(+). Its function is as follows. Conversion of NADPH, generated by peripheral catabolic pathways, to NADH, which can enter the respiratory chain for energy generation. This is Soluble pyridine nucleotide transhydrogenase from Pseudomonas putida (strain W619).